Here is a 647-residue protein sequence, read N- to C-terminus: MIKITFPDGAVREFESGVTTFDIAESISKSLAKKALAGKFNDQLIDTTRAIEEDGSIEIVTPDHKDAYEVLRHSAAHLFAQAAKRLFPNLHLGVGPAIAEGFYYDTDNTEGQISNEDLPRIEAEMQKIVTENYPCIREEVTKEEALELFKDDPYKVELINEHAGAGLTVYRQGEFVDLCRGPHVPSTGRIQVFHLLNVAGAYWRGNSDNNMMQRIYGTAWFDKKDLKAYLTRLEEAKERDHRKLGKELDLFMISQEVGQGLPFWLPDGATIRRTLERYITDKELASGYQHVYTPPLASVELYKTSGHWDHYQEDMFPVMDMGDGEEFVLRPMNCPHHIQVYKNHVRSYRELPIRIAELGMMHRYEKSGALSGLQRVREMTLNDGHIFVTPEQIQEEFQRALQLIIDVYADFNLTDYRFRLSYRDPNDTHKYYDNDEMWENAQSMLKAALDEMGVDYFEAEGEAAFYGPKLDIQVKTALGNEETLSTIQLDFLLPERFDLKYIGADGEEHRPVMIHRGVISTMERFTAILIETYKGAFPTWLAPHQVTVIPISNEAHIDYAWEVAKTLRDRGVRADVDDRNEKMQYKIRASQTSKIPYQLIVGDKEMEEKSVNVRRYGSKATHTESVEEFVENILADIARKSRPDAQA.

In terms of domain architecture, TGS spans 1 to 61 (MIKITFPDGA…EEDGSIEIVT (61 aa)). The interval 240 to 538 (DHRKLGKELD…LIETYKGAFP (299 aa)) is catalytic. Positions 334, 385, and 515 each coordinate Zn(2+).

The protein belongs to the class-II aminoacyl-tRNA synthetase family. In terms of assembly, homodimer. Zn(2+) serves as cofactor.

The protein resides in the cytoplasm. It carries out the reaction tRNA(Thr) + L-threonine + ATP = L-threonyl-tRNA(Thr) + AMP + diphosphate + H(+). Catalyzes the attachment of threonine to tRNA(Thr) in a two-step reaction: L-threonine is first activated by ATP to form Thr-AMP and then transferred to the acceptor end of tRNA(Thr). Also edits incorrectly charged L-seryl-tRNA(Thr). The chain is Threonine--tRNA ligase from Streptococcus pyogenes serotype M3 (strain ATCC BAA-595 / MGAS315).